The following is a 252-amino-acid chain: MTEPILQIRDLSVYYNQKKTLKDVSLDLYPNEITALIGPSGSGKSTLLRSINRMNDLNPEVTITGSIVYNGHNIYSPRTDTVDLRKEIGMVFQQPNPFPMSIYENVVYGLHLKGIRDKSILDHAVESSLKGASIWNEVKDRLHDSAVGLSGGQQQRVCIARVLATSPRIILLDEPTSALDPISAGKIEETLLLLKKDYTLAIVTRSMQQASRLSDRTGFFLEGDLLECGPTKAMFMNPKRKETEDYISGKFG.

The ABC transporter domain occupies 6–247; sequence LQIRDLSVYY…PKRKETEDYI (242 aa). Residue 38–45 coordinates ATP; sequence GPSGSGKS.

The protein belongs to the ABC transporter superfamily. Phosphate importer (TC 3.A.1.7) family. As to quaternary structure, the complex is composed of two ATP-binding proteins (PstB), two transmembrane proteins (PstC and PstA) and a solute-binding protein (PstS).

Its subcellular location is the cell membrane. It carries out the reaction phosphate(out) + ATP + H2O = ADP + 2 phosphate(in) + H(+). Part of the ABC transporter complex PstSACB involved in phosphate import. Responsible for energy coupling to the transport system. In Streptococcus pyogenes serotype M6 (strain ATCC BAA-946 / MGAS10394), this protein is Phosphate import ATP-binding protein PstB 1.